The following is a 272-amino-acid chain: Cytochrome b-c1 complex subunit Rieske, mitochondrial (272 aa).

At 77–104 (VHNDVTVPDFSAYRREDVMDATTSSQTS) the chain is on the mitochondrial matrix side. The helical transmembrane segment at 105 to 138 (SEDRKGFSYLVTATACVATAYAAKNVVTQFISSL) threads the bilayer. Residues 139 to 272 (SASADVLALS…FVGDDLVVVG (134 aa)) lie on the Mitochondrial intermembrane side of the membrane. Residues 185-270 (EAEVDVSKLR…YQFVGDDLVV (86 aa)) enclose the Rieske domain. The [2Fe-2S] cluster site is built by cysteine 215, histidine 217, leucine 218, cysteine 234, histidine 237, and serine 239. Cysteine 220 and cysteine 236 form a disulfide bridge.

Belongs to the Rieske iron-sulfur protein family. In terms of assembly, component of the ubiquinol-cytochrome c oxidoreductase (cytochrome b-c1 complex, complex III, CIII), a multisubunit enzyme composed of 11 subunits. The complex is composed of 3 respiratory subunits cytochrome b, cytochrome c1 and Rieske protein UQCRFS1, 2 core protein subunits UQCRC1/QCR1 and UQCRC2/QCR2, and 6 low-molecular weight protein subunits UQCRH/QCR6, UQCRB/QCR7, UQCRQ/QCR8, UQCR10/QCR9, UQCR11/QCR10 and subunit 9, the cleavage product of Rieske protein UQCRFS1. The complex exists as an obligatory dimer and forms supercomplexes (SCs) in the inner mitochondrial membrane with NADH-ubiquinone oxidoreductase (complex I, CI) and cytochrome c oxidase (complex IV, CIV), resulting in different assemblies (supercomplex SCI(1)III(2)IV(1) and megacomplex MCI(2)III(2)IV(2)). Incorporation of the Rieske protein UQCRFS1 is the penultimate step in complex III assembly. Interacts with TTC19, which is involved in the clearance of UQCRFS1 fragments. As to quaternary structure, component of the ubiquinol-cytochrome c oxidoreductase (cytochrome b-c1 complex, complex III, CIII). Subunit 9 corresponds to the mitochondrial targeting sequence (MTS) of Rieske protein UQCRFS1. It is retained after processing and incorporated inside complex III, where it remains bound to the complex and localizes between the 2 core subunits UQCRC1/QCR1 and UQCRC2/QCR2. It depends on [2Fe-2S] cluster as a cofactor. Post-translationally, proteolytic processing is necessary for the correct insertion of UQCRFS1 in the complex III dimer. Several fragments are generated during UQCRFS1 insertion, most probably due to the endogenous matrix-processing peptidase (MPP) activity of the 2 core protein subunits UQCRC1/QCR1 and UQCRC2/QCR2, which are homologous to the 2 mitochondrial-processing peptidase (MPP) subunits beta-MPP and alpha-MPP respectively. The action of the protease is also necessary for the clearance of the UQCRFS1 fragments.

It localises to the mitochondrion inner membrane. It catalyses the reaction a quinol + 2 Fe(III)-[cytochrome c](out) = a quinone + 2 Fe(II)-[cytochrome c](out) + 2 H(+)(out). Functionally, component of the ubiquinol-cytochrome c oxidoreductase, a multisubunit transmembrane complex that is part of the mitochondrial electron transport chain which drives oxidative phosphorylation. The respiratory chain contains 3 multisubunit complexes succinate dehydrogenase (complex II, CII), ubiquinol-cytochrome c oxidoreductase (cytochrome b-c1 complex, complex III, CIII) and cytochrome c oxidase (complex IV, CIV), that cooperate to transfer electrons derived from NADH and succinate to molecular oxygen, creating an electrochemical gradient over the inner membrane that drives transmembrane transport and the ATP synthase. The cytochrome b-c1 complex catalyzes electron transfer from ubiquinol to cytochrome c, linking this redox reaction to translocation of protons across the mitochondrial inner membrane, with protons being carried across the membrane as hydrogens on the quinol. In the process called Q cycle, 2 protons are consumed from the matrix, 4 protons are released into the intermembrane space and 2 electrons are passed to cytochrome c. The Rieske protein is a catalytic core subunit containing a [2Fe-2S] iron-sulfur cluster. It cycles between 2 conformational states during catalysis to transfer electrons from the quinol bound in the Q(0) site in cytochrome b to cytochrome c1. Incorporation of UQCRFS1 is the penultimate step in complex III assembly. In terms of biological role, component of the ubiquinol-cytochrome c oxidoreductase (cytochrome b-c1 complex, complex III, CIII). UQCRFS1 undergoes proteolytic processing once it is incorporated in the complex III dimer. One of the fragments, called subunit 9, corresponds to its mitochondrial targeting sequence (MTS). The proteolytic processing is necessary for the correct insertion of UQCRFS1 in the complex III dimer, but the persistence of UQCRFS1-derived fragments may prevent newly imported UQCRFS1 to be processed and assembled into complex III and is detrimental for the complex III structure and function. The polypeptide is Cytochrome b-c1 complex subunit Rieske, mitochondrial (UQCRFS1) (Gallus gallus (Chicken)).